Reading from the N-terminus, the 579-residue chain is ATP-dependent lipid A-core flippase (579 aa).

5 consecutive transmembrane segments (helical) span residues 24 to 44, 63 to 83, 150 to 170, 251 to 271, and 275 to 295; these read FALSIVGLILTAATEPMLPAL, WVPLLLLGLFVLRGVASFIST, VLGLLGYLVWLNWRLTLIVFA, VIQFIAAIALAIIVFIAAGQA, and TTTVGGFVAFFMAMLLLFAPL. Positions 25 to 307 constitute an ABC transmembrane type-1 domain; that stretch reads ALSIVGLILT…LTAVNDQLQR (283 aa). Residues 339 to 575 form the ABC transporter domain; the sequence is LAFRDVGLTY…QGRYAQLHAL (237 aa). 373–380 lines the ATP pocket; it reads GASGSGKT.

Belongs to the ABC transporter superfamily. Lipid exporter (TC 3.A.1.106) family. In terms of assembly, homodimer.

The protein resides in the cell inner membrane. It catalyses the reaction ATP + H2O + lipid A-core oligosaccharideSide 1 = ADP + phosphate + lipid A-core oligosaccharideSide 2.. Involved in lipopolysaccharide (LPS) biosynthesis. Translocates lipid A-core from the inner to the outer leaflet of the inner membrane. Transmembrane domains (TMD) form a pore in the inner membrane and the ATP-binding domain (NBD) is responsible for energy generation. This is ATP-dependent lipid A-core flippase from Thiobacillus denitrificans (strain ATCC 25259 / T1).